Consider the following 190-residue polypeptide: UPF0200 protein TGAM_0868 (190 aa).

7-14 (GMPGSGKS) lines the ATP pocket.

This sequence belongs to the UPF0200 family.

The sequence is that of UPF0200 protein TGAM_0868 from Thermococcus gammatolerans (strain DSM 15229 / JCM 11827 / EJ3).